Here is a 101-residue protein sequence, read N- to C-terminus: Helix-loop-helix protein 17 (101 aa).

The interval 14-27 (GVRLSINLRERCRM) is basic motif. A bHLH domain is found at 14–68 (GVRLSINLRERCRMHDLNEALDDLRAVIPYAHGGSVRKLSKIATLLLAKNHIIMQ). Residues 28-68 (HDLNEALDDLRAVIPYAHGGSVRKLSKIATLLLAKNHIIMQ) form a helix-loop-helix motif region.

In terms of tissue distribution, expressed in neuronal tissues of the head, including sheath cells of the cephalic sensilla (CEPsh) glia.

It is found in the nucleus. Probable transcription factor that regulates the expression of dopamine receptors dop-1, dop-2 and dop-3 and thus dopamine-dependent behaviors. May act redundantly with hlh-31 and hlh-32 to regulate ventral CEPsh glia functions. May play a role in chemotactic responses in larvae. The protein is Helix-loop-helix protein 17 of Caenorhabditis elegans.